A 200-amino-acid chain; its full sequence is Glutathione S-transferase domain-containing protein DDB_G0273153/DDB_G0273923 (200 aa).

A GST N-terminal domain is found at 1-71 (MISSIYIFKI…YISNNHNFSG (71 aa)). In terms of domain architecture, GST C-terminal spans 73–195 (SLQESARVDD…INSNNINSQS (123 aa)).

Belongs to the GST superfamily.

This chain is Glutathione S-transferase domain-containing protein DDB_G0273153/DDB_G0273923, found in Dictyostelium discoideum (Social amoeba).